The following is a 376-amino-acid chain: Nuclear egress protein 1 (376 aa).

The residue at position 19 (serine 19) is a Phosphoserine. The segment at 22 to 57 is disordered; sequence RKRRQRELASKVASTVNGATSANNHGEPPSPADARP. The segment covering 33 to 45 has biased composition (polar residues); it reads VASTVNGATSANN. Residues 106-211 form a CCCH-type zinc finger; it reads CLDISPYGNE…HVIFENPDVH (106 aa). Residues 316–376 are disordered; sequence VVSTNGCGPS…PLFLNSIRAP (61 aa). Over residues 317 to 332 the composition is skewed to polar residues; that stretch reads VSTNGCGPSSSSQSTP.

Belongs to the herpesviridae NEC1 protein family. As to quaternary structure, forms a heterohexameric complex with NEC2. Interacts with capsid vertex specific component 2/CVC2; this interaction directs the capsid to the host inner nuclear membrane to initiate budding. Post-translationally, phosphorylated at serine residues in the N-terminus. This phosphorylation regulates the localization within the inner nuclear membrane. Phosphorylation by viral kinase UL97 at Ser-19 plays an important role for correct viral nuclear egress complex (NEC) localization.

It is found in the host nucleus inner membrane. Plays an essential role in virion nuclear egress, the first step of virion release from infected cell. Within the host nucleus, NEC1 interacts with the newly formed capsid through the vertexes and directs it to the inner nuclear membrane by associating with NEC2. Induces the budding of the capsid at the inner nuclear membrane as well as its envelopment into the perinuclear space. There, the NEC1/NEC2 complex promotes the fusion of the enveloped capsid with the outer nuclear membrane and the subsequent release of the viral capsid into the cytoplasm where it will reach the secondary budding sites in the host Golgi or trans-Golgi network. This Homo sapiens (Human) protein is Nuclear egress protein 1.